The primary structure comprises 61 residues: Large ribosomal subunit protein uL30 (61 aa).

This sequence belongs to the universal ribosomal protein uL30 family. In terms of assembly, part of the 50S ribosomal subunit.

This chain is Large ribosomal subunit protein uL30, found in Treponema denticola (strain ATCC 35405 / DSM 14222 / CIP 103919 / JCM 8153 / KCTC 15104).